Consider the following 379-residue polypeptide: MATAGKVIKCKAAVAWEAGKPLSIEEVEVAPPQAMEVRVKILYTSLCHTDVYFWEAKGQTPVFPRIFGHEAGGIIESVGEGVTDVAPGDHVLPVFTGECKECPHCKSAESNMCDLLRINTVRGVMIGDGKSRFSINGKPIYHFVGTSTFSEYTVMHVGCVAKINPEAPLDKVCVLSCGISTGLGASINVAKPPKGSTVAIFGLGAVGLAAAEGARIAGASRIIGVDLNPSRFEEAKKFGCTEFVNPKDHNKPVQEVLADMTNGGVDRSVECTGNINAMIQAFECVHDGWGVAVLVGVPHKDAEFKTHPMNFLNERTLKGTFFGNFKPRTDLPNVVELYMKKELEVEKFITHSVPFSEINKAFDLMAKGEGIRCIIRMEN.

Residues C47, T49, H69, C99, C102, C105, C113, and C177 each coordinate Zn(2+). An alcohol-binding residues include T49 and H69. T49 is a binding site for NAD(+). Residues G202 to G207, D226, R231, T272, V295, V295 to V297, F322, and R372 contribute to the NAD(+) site.

Belongs to the zinc-containing alcohol dehydrogenase family. Homodimer. Zn(2+) is required as a cofactor.

The protein resides in the cytoplasm. The catalysed reaction is a primary alcohol + NAD(+) = an aldehyde + NADH + H(+). The enzyme catalyses a secondary alcohol + NAD(+) = a ketone + NADH + H(+). This Cenchrus americanus (Pearl millet) protein is Alcohol dehydrogenase 1 (ADH1).